The sequence spans 248 residues: NAD(P)H-quinone oxidoreductase subunit K 1 (248 aa).

A propeptide spanning residues 1–2 (MS) is cleaved from the precursor. Positions 62, 63, 127, and 158 each coordinate [4Fe-4S] cluster. Residues 228–248 (MGMPVPPALTTSQQKEQLNRG) are disordered. Residues 236–248 (LTTSQQKEQLNRG) are compositionally biased toward polar residues.

The protein belongs to the complex I 20 kDa subunit family. NDH-1 can be composed of about 15 different subunits; different subcomplexes with different compositions have been identified which probably have different functions. [4Fe-4S] cluster serves as cofactor.

Its subcellular location is the cellular thylakoid membrane. The catalysed reaction is a plastoquinone + NADH + (n+1) H(+)(in) = a plastoquinol + NAD(+) + n H(+)(out). The enzyme catalyses a plastoquinone + NADPH + (n+1) H(+)(in) = a plastoquinol + NADP(+) + n H(+)(out). NDH-1 shuttles electrons from an unknown electron donor, via FMN and iron-sulfur (Fe-S) centers, to quinones in the respiratory and/or the photosynthetic chain. The immediate electron acceptor for the enzyme in this species is believed to be plastoquinone. Couples the redox reaction to proton translocation, and thus conserves the redox energy in a proton gradient. Cyanobacterial NDH-1 also plays a role in inorganic carbon-concentration. The polypeptide is NAD(P)H-quinone oxidoreductase subunit K 1 (Synechocystis sp. (strain ATCC 27184 / PCC 6803 / Kazusa)).